We begin with the raw amino-acid sequence, 506 residues long: Thyroid hormone receptor alpha (506 aa).

The disordered stretch occupies residues 1–32 (MEQKPSKVECGSDPEENSARSPDGKRKRKNGQ). The segment at 1–52 (MEQKPSKVECGSDPEENSARSPDGKRKRKNGQCSLKTSMSGYIPSYLDKDEQ) is modulating. Residues Cys53, Cys56, Cys70, Cys73, Cys91, Cys97, Cys107, and Cys110 each coordinate Zn(2+). 2 NR C4-type zinc fingers span residues 53–73 (CVVCGDKATGYHYRCITCEGC) and 91–115 (CKYDSCCVIDKITRNQCQLCRFKKC). Positions 53–127 (CVVCGDKATG…VGMAMDLVLD (75 aa)) form a DNA-binding region, nuclear receptor. The 245-residue stretch at 163–407 (EEWDLIHVAT…EGQQLLGMHV (245 aa)) folds into the NR LBD domain. The 3,3',5-triiodo-L-thyronine site is built by Arg228 and Ser277. A disordered region spans residues 460–506 (GEDDSSEAGSLTSSDEDPEVCEDAAQATQPLPEAPPRADGEGGGGGS).

The protein belongs to the nuclear hormone receptor family. NR1 subfamily. Binds DNA as a dimer; homodimer and heterodimer with RXRB. Interacts with NCOA3 and NCOA6 coactivators, leading to a strong increase of transcription of target genes. Probably interacts with SFPQ. Interacts with C1D. Interacts with AKAP13. Interacts with TP53INP2. Interacts with PER2. Interacts with PER2. Isoform alpha-2 and isoform alpha-1 interact with TACC1, but the interaction with alpha-1 is weaker. The interaction with isoform alpha-1, but not alpha-2, is decreased in the presence of thyroid hormone T3.

The protein resides in the nucleus. The protein localises to the cytoplasm. In terms of biological role, nuclear hormone receptor that can act as a repressor or activator of transcription. High affinity receptor for thyroid hormones, including triiodothyronine and thyroxine. This is Thyroid hormone receptor alpha (THRA) from Sus scrofa (Pig).